Consider the following 152-residue polypeptide: Flagellar assembly factor FliW (152 aa).

It belongs to the FliW family. As to quaternary structure, interacts with translational regulator CsrA and flagellin(s).

It localises to the cytoplasm. In terms of biological role, acts as an anti-CsrA protein, binds CsrA and prevents it from repressing translation of its target genes, one of which is flagellin. Binds to flagellin and participates in the assembly of the flagellum. The protein is Flagellar assembly factor FliW of Caldicellulosiruptor bescii (strain ATCC BAA-1888 / DSM 6725 / KCTC 15123 / Z-1320) (Anaerocellum thermophilum).